The chain runs to 355 residues: UDP-N-acetylglucosamine--N-acetylmuramyl-(pentapeptide) pyrophosphoryl-undecaprenol N-acetylglucosamine transferase (355 aa).

UDP-N-acetyl-alpha-D-glucosamine is bound by residues Thr-7–Gly-9, Asn-119, Arg-159, Ser-187, Ile-241, and Gln-286.

The protein belongs to the glycosyltransferase 28 family. MurG subfamily.

Its subcellular location is the cell inner membrane. The enzyme catalyses di-trans,octa-cis-undecaprenyl diphospho-N-acetyl-alpha-D-muramoyl-L-alanyl-D-glutamyl-meso-2,6-diaminopimeloyl-D-alanyl-D-alanine + UDP-N-acetyl-alpha-D-glucosamine = di-trans,octa-cis-undecaprenyl diphospho-[N-acetyl-alpha-D-glucosaminyl-(1-&gt;4)]-N-acetyl-alpha-D-muramoyl-L-alanyl-D-glutamyl-meso-2,6-diaminopimeloyl-D-alanyl-D-alanine + UDP + H(+). It functions in the pathway cell wall biogenesis; peptidoglycan biosynthesis. Cell wall formation. Catalyzes the transfer of a GlcNAc subunit on undecaprenyl-pyrophosphoryl-MurNAc-pentapeptide (lipid intermediate I) to form undecaprenyl-pyrophosphoryl-MurNAc-(pentapeptide)GlcNAc (lipid intermediate II). This is UDP-N-acetylglucosamine--N-acetylmuramyl-(pentapeptide) pyrophosphoryl-undecaprenol N-acetylglucosamine transferase from Nitrosomonas eutropha (strain DSM 101675 / C91 / Nm57).